Reading from the N-terminus, the 128-residue chain is Sulfurtransferase TusD (128 aa).

Catalysis depends on Cys78, which acts as the Cysteine persulfide intermediate.

It belongs to the DsrE/TusD family. Heterohexamer, formed by a dimer of trimers. The hexameric TusBCD complex contains 2 copies each of TusB, TusC and TusD. The TusBCD complex interacts with TusE.

Its subcellular location is the cytoplasm. Its function is as follows. Part of a sulfur-relay system required for 2-thiolation of 5-methylaminomethyl-2-thiouridine (mnm(5)s(2)U) at tRNA wobble positions. Accepts sulfur from TusA and transfers it in turn to TusE. This is Sulfurtransferase TusD from Escherichia coli O45:K1 (strain S88 / ExPEC).